We begin with the raw amino-acid sequence, 447 residues long: N-succinylarginine dihydrolase (447 aa).

Substrate-binding positions include 19-28 (AGLSFGNEAS), Asn110, and 137-138 (HR). Residue Glu174 is part of the active site. Arg213 lines the substrate pocket. His249 is a catalytic residue. Asp251 and Asn364 together coordinate substrate. The active-site Nucleophile is Cys370.

Belongs to the succinylarginine dihydrolase family. In terms of assembly, homodimer.

The catalysed reaction is N(2)-succinyl-L-arginine + 2 H2O + 2 H(+) = N(2)-succinyl-L-ornithine + 2 NH4(+) + CO2. It participates in amino-acid degradation; L-arginine degradation via AST pathway; L-glutamate and succinate from L-arginine: step 2/5. Functionally, catalyzes the hydrolysis of N(2)-succinylarginine into N(2)-succinylornithine, ammonia and CO(2). The chain is N-succinylarginine dihydrolase from Yersinia pseudotuberculosis serotype O:1b (strain IP 31758).